The sequence spans 406 residues: Tryptophan synthase beta chain (406 aa).

Lys99 bears the N6-(pyridoxal phosphate)lysine mark.

Belongs to the TrpB family. In terms of assembly, tetramer of two alpha and two beta chains. Requires pyridoxal 5'-phosphate as cofactor.

It catalyses the reaction (1S,2R)-1-C-(indol-3-yl)glycerol 3-phosphate + L-serine = D-glyceraldehyde 3-phosphate + L-tryptophan + H2O. It participates in amino-acid biosynthesis; L-tryptophan biosynthesis; L-tryptophan from chorismate: step 5/5. Its function is as follows. The beta subunit is responsible for the synthesis of L-tryptophan from indole and L-serine. The polypeptide is Tryptophan synthase beta chain (Methylobacterium sp. (strain 4-46)).